Here is a 281-residue protein sequence, read N- to C-terminus: Bifunctional protein FolD (281 aa).

NADP(+)-binding positions include 165–167, T192, and V233; that span reads GRG.

This sequence belongs to the tetrahydrofolate dehydrogenase/cyclohydrolase family. In terms of assembly, homodimer.

The catalysed reaction is (6R)-5,10-methylene-5,6,7,8-tetrahydrofolate + NADP(+) = (6R)-5,10-methenyltetrahydrofolate + NADPH. It catalyses the reaction (6R)-5,10-methenyltetrahydrofolate + H2O = (6R)-10-formyltetrahydrofolate + H(+). It functions in the pathway one-carbon metabolism; tetrahydrofolate interconversion. In terms of biological role, catalyzes the oxidation of 5,10-methylenetetrahydrofolate to 5,10-methenyltetrahydrofolate and then the hydrolysis of 5,10-methenyltetrahydrofolate to 10-formyltetrahydrofolate. The protein is Bifunctional protein FolD of Mycobacterium ulcerans (strain Agy99).